Reading from the N-terminus, the 706-residue chain is Polyribonucleotide nucleotidyltransferase (706 aa).

Mg(2+)-binding residues include Asp485 and Asp491. Residues 552-611 (PRMLKMKIHPDKIREVIGSGGKTINKIIEDTGVKIDIENDGTIFIAAQTQEAGELALSII) form the KH domain. In terms of domain architecture, S1 motif spans 621–689 (GDIFKGKVIK…QQGKVSLSRK (69 aa)).

It belongs to the polyribonucleotide nucleotidyltransferase family. Mg(2+) is required as a cofactor.

It localises to the cytoplasm. It catalyses the reaction RNA(n+1) + phosphate = RNA(n) + a ribonucleoside 5'-diphosphate. Its function is as follows. Involved in mRNA degradation. Catalyzes the phosphorolysis of single-stranded polyribonucleotides processively in the 3'- to 5'-direction. This chain is Polyribonucleotide nucleotidyltransferase, found in Alkaliphilus oremlandii (strain OhILAs) (Clostridium oremlandii (strain OhILAs)).